The primary structure comprises 208 residues: Interleukin-6 (208 aa).

A signal peptide spans 1-20 (MNSLSTIAFSLGLLLVTATA). Residues C67 and C73 are joined by a disulfide bond. S76 is modified (phosphoserine). C96 and C106 are oxidised to a cystine. Residue N167 is glycosylated (N-linked (GlcNAc...) asparagine).

This sequence belongs to the IL-6 superfamily. In terms of assembly, component of a hexamer of two molecules each of IL6, IL6R and IL6ST; first binds to IL6R to associate with the signaling subunit IL6ST. Interacts with IL6R (via the N-terminal ectodomain); this interaction may be affected by IL6R-binding with SORL1, hence decreasing IL6 cis signaling. Interacts with SORL1 (via the N-terminal ectodomain); this interaction leads to IL6 internalization and lysosomal degradation. May form a trimeric complex with the soluble SORL1 ectodomain and soluble IL6R receptor; this interaction might stabilize circulating IL6, hence promoting IL6 trans signaling.

The protein localises to the secreted. Its function is as follows. Cytokine with a wide variety of biological functions in immunity, tissue regeneration, and metabolism. Binds to IL6R, then the complex associates to the signaling subunit IL6ST/gp130 to trigger the intracellular IL6-signaling pathway. The interaction with the membrane-bound IL6R and IL6ST stimulates 'classic signaling', whereas the binding of IL6 and soluble IL6R to IL6ST stimulates 'trans-signaling'. Alternatively, 'cluster signaling' occurs when membrane-bound IL6:IL6R complexes on transmitter cells activate IL6ST receptors on neighboring receiver cells. In terms of biological role, IL6 is a potent inducer of the acute phase response. Rapid production of IL6 contributes to host defense during infection and tissue injury, but excessive IL6 synthesis is involved in disease pathology. In the innate immune response, is synthesized by myeloid cells, such as macrophages and dendritic cells, upon recognition of pathogens through toll-like receptors (TLRs) at the site of infection or tissue injury. In the adaptive immune response, is required for the differentiation of B cells into immunoglobulin-secreting cells. Plays a major role in the differentiation of CD4(+) T cell subsets. Essential factor for the development of T follicular helper (Tfh) cells that are required for the induction of germinal-center formation. Required to drive naive CD4(+) T cells to the Th17 lineage. Also required for proliferation of myeloma cells and the survival of plasmablast cells. Acts as an essential factor in bone homeostasis and on vessels directly or indirectly by induction of VEGF, resulting in increased angiogenesis activity and vascular permeability. Induces, through 'trans-signaling' and synergistically with IL1B and TNF, the production of VEGF. Involved in metabolic controls, is discharged into the bloodstream after muscle contraction increasing lipolysis and improving insulin resistance. 'Trans-signaling' in central nervous system also regulates energy and glucose homeostasis. Mediates, through GLP-1, crosstalk between insulin-sensitive tissues, intestinal L cells and pancreatic islets to adapt to changes in insulin demand. Also acts as a myokine. Plays a protective role during liver injury, being required for maintenance of tissue regeneration. Also has a pivotal role in iron metabolism by regulating HAMP/hepcidin expression upon inflammation or bacterial infection. Through activation of IL6ST-YAP-NOTCH pathway, induces inflammation-induced epithelial regeneration. The protein is Interleukin-6 (IL6) of Delphinapterus leucas (Beluga whale).